The sequence spans 239 residues: Protein Thf1 (239 aa).

The stretch at 183–219 forms a coiled coil; sequence ERVKKDLELYRSNLDRLKQARAIVEEMVKAARRQQER. Residues 211 to 221 are compositionally biased toward basic and acidic residues; the sequence is KAARRQQERRQ. The interval 211-239 is disordered; sequence KAARRQQERRQSTASLPETPAADRRESSG.

Belongs to the THF1 family.

Its function is as follows. May be involved in photosynthetic membrane biogenesis. This is Protein Thf1 from Synechococcus sp. (strain JA-3-3Ab) (Cyanobacteria bacterium Yellowstone A-Prime).